A 318-amino-acid chain; its full sequence is Serine protease 41 (318 aa).

The signal sequence occupies residues 1 to 19 (MGARGALLLALLLARAGLG). Residues 20-54 (KPGELGALQAGPGAARRPGGGGREEACGHREIHAL) constitute a propeptide that is removed on maturation. Residues 55–297 (VAGGVESARG…YFHWIRRVMS (243 aa)) form the Peptidase S1 domain. A disulfide bridge connects residues Cys80 and Cys96. Active-site charge relay system residues include His95 and Asp147. Cystine bridges form between Cys181-Cys255, Cys215-Cys234, and Cys245-Cys273. N-linked (GlcNAc...) asparagine glycosylation is present at Asn211. Catalysis depends on Ser249, which acts as the Charge relay system. The N-linked (GlcNAc...) asparagine glycan is linked to Asn284. Ser299 is lipidated: GPI-anchor amidated serine. The propeptide at 300–318 (TPRPNPSQLLLLLALLWAP) is removed in mature form.

This sequence belongs to the peptidase S1 family. In terms of processing, N-glycosylated.

The protein localises to the cell membrane. This chain is Serine protease 41, found in Homo sapiens (Human).